Here is a 339-residue protein sequence, read N- to C-terminus: 4-amino-5-hydroxymethyl-2-methylpyrimidine phosphate synthase (339 aa).

N6-(pyridoxal phosphate)lysine is present on Lys62. Residue His66 is part of the active site. 115–118 (GEFG) contributes to the pyridoxal 5'-phosphate binding site. The short motif at 195–199 (CCCFC) is the CCCFC; essential for catalytic activity, may be the site of iron coordination element.

The protein belongs to the NMT1/THI5 family. In terms of assembly, homodimer. Fe(3+) serves as cofactor.

It catalyses the reaction N(6)-(pyridoxal phosphate)-L-lysyl-[4-amino-5-hydroxymethyl-2-methylpyrimidine phosphate synthase] + L-histidyl-[4-amino-5-hydroxymethyl-2-methylpyrimidine phosphate synthase] + 2 Fe(3+) + 4 H2O = L-lysyl-[4-amino-5-hydroxymethyl-2-methylpyrimidine phosphate synthase] + (2S)-2-amino-5-hydroxy-4-oxopentanoyl-[4-amino-5-hydroxymethyl-2-methylpyrimidine phosphate synthase] + 4-amino-2-methyl-5-(phosphooxymethyl)pyrimidine + 3-oxopropanoate + 2 Fe(2+) + 2 H(+). The protein operates within cofactor biosynthesis; thiamine diphosphate biosynthesis. Responsible for the formation of the pyrimidine heterocycle in the thiamine biosynthesis pathway. Catalyzes the formation of hydroxymethylpyrimidine phosphate (HMP-P) from histidine and pyridoxal phosphate (PLP). The protein uses PLP and the active site histidine to form HMP-P, generating an inactive enzyme. The enzyme can only undergo a single turnover, which suggests it is a suicide enzyme. The chain is 4-amino-5-hydroxymethyl-2-methylpyrimidine phosphate synthase from Candida albicans (strain WO-1) (Yeast).